A 79-amino-acid polypeptide reads, in one-letter code: U24-theraphotoxin-Cg1a (79 aa).

Positions 1–19 (MRVLFIIAVLALISVGCYA) are cleaved as a signal peptide. A propeptide spanning residues 20 to 44 (SEMKDRSSRNEVLSAIFAIEEPQER) is cleaved from the precursor. Intrachain disulfides connect Cys-46–Cys-61, Cys-53–Cys-66, and Cys-60–Cys-73. Position 78 is a tryptophan amide (Trp-78).

The protein belongs to the neurotoxin 10 (Hwtx-1) family. 35 (Jztx-27) subfamily. As to expression, expressed by the venom gland.

It is found in the secreted. Probable ion channel inhibitor. This Chilobrachys guangxiensis (Chinese earth tiger tarantula) protein is U24-theraphotoxin-Cg1a.